Here is a 608-residue protein sequence, read N- to C-terminus: tRNA (guanine(37)-N(1))-methyltransferase 1 (608 aa).

A disordered region spans residues 207–229; sequence SRPKKKKRRKEEERSEGKKRTGK. A compositionally biased stretch (basic and acidic residues) spans 216-229; the sequence is KEEERSEGKKRTGK. S-adenosyl-L-methionine contacts are provided by residues Arg-425, 463–464, 491–492, and Asn-514; these read DL and DG.

It belongs to the class I-like SAM-binding methyltransferase superfamily. TRM5/TYW2 family. As to quaternary structure, monomer.

It is found in the mitochondrion matrix. Its subcellular location is the nucleus. The protein resides in the cytoplasm. It catalyses the reaction guanosine(37) in tRNA + S-adenosyl-L-methionine = N(1)-methylguanosine(37) in tRNA + S-adenosyl-L-homocysteine + H(+). In terms of biological role, specifically methylates the N1 position of guanosine-37 in various cytoplasmic and mitochondrial tRNAs. Methylation is not dependent on the nature of the nucleoside 5' of the target nucleoside. This is the first step in the biosynthesis of wybutosine (yW), a modified base adjacent to the anticodon of tRNAs and required for accurate decoding. This Vitis vinifera (Grape) protein is tRNA (guanine(37)-N(1))-methyltransferase 1.